A 1593-amino-acid chain; its full sequence is Autotransporter CRAC (1593 aa).

The N-terminal stretch at Met-1 to Ala-54 is a signal peptide. A compositionally biased stretch (polar residues) spans Gly-65 to Asn-85. 2 disordered regions span residues Gly-65–Ser-100 and Lys-1267–Pro-1286. Positions Ser-86–Ser-97 are enriched in low complexity. Over residues Asp-1269–Thr-1280 the composition is skewed to polar residues. The region spanning Asn-1325–Phe-1593 is the Autotransporter domain.

In terms of processing, glycosylated by heptosyltransferas BAHTCr. Glycosylation is required for adhesion to mammalian cells and colonization of the mouse host gastrointestinal tract.

The protein localises to the cell outer membrane. Autotransporter required for the colonization of the mouse host gastrointestinal tract, possibly by mediating bacteria adhesion to host cells. The polypeptide is Autotransporter CRAC (Citrobacter rodentium (strain ICC168) (Citrobacter freundii biotype 4280)).